We begin with the raw amino-acid sequence, 842 residues long: GPI ethanolamine phosphate transferase 2 (842 aa).

N186 carries N-linked (GlcNAc...) asparagine glycosylation. A helical transmembrane segment spans residues 409-429 (YNYPLLFIGCFLSIVITGTIY). The N-linked (GlcNAc...) asparagine glycan is linked to N441. 2 consecutive transmembrane segments (helical) span residues 442 to 462 (TSILIAIAALMGISVFGSSFI) and 468 to 488 (FWWWIITGLVLLSMVNLNFSS). N506 carries N-linked (GlcNAc...) asparagine glycosylation. The chain crosses the membrane as a helical span at residues 524 to 544 (GNIDALWWLNLITVTVVGLNL). N551 carries N-linked (GlcNAc...) asparagine glycosylation. The helical transmembrane segment at 554–574 (VSLLGFSDLLSMGLLSMITFL) threads the bilayer. An N-linked (GlcNAc...) asparagine glycan is attached at N578. A run of 3 helical transmembrane segments spans residues 615-635 (IHTALIPLARIFFKLFFAVLV), 698-718 (YLLAVIFGIILQFFTFFQSGG), and 740-760 (IYVVGLMMCISNFAPTIYWSF). N771 is a glycosylation site (N-linked (GlcNAc...) asparagine). Helical transmembrane passes span 783–803 (YPFIIIQSTIGCCLLLACIIL) and 821–841 (MVWTIFVGIIVHWIPEILLLL).

Belongs to the PIGG/PIGN/PIGO family. PIGG subfamily.

The protein resides in the endoplasmic reticulum membrane. Its pathway is glycolipid biosynthesis; glycosylphosphatidylinositol-anchor biosynthesis. Ethanolamine phosphate transferase involved in glycosylphosphatidylinositol-anchor biosynthesis. Transfers ethanolamine phosphate to the GPI second mannose. This chain is GPI ethanolamine phosphate transferase 2 (LAS21), found in Candida glabrata (strain ATCC 2001 / BCRC 20586 / JCM 3761 / NBRC 0622 / NRRL Y-65 / CBS 138) (Yeast).